The following is a 196-amino-acid chain: dTTP/UTP pyrophosphatase (196 aa).

The Proton acceptor role is filled by Asp-72.

The protein belongs to the Maf family. YhdE subfamily. It depends on a divalent metal cation as a cofactor.

It localises to the cytoplasm. It catalyses the reaction dTTP + H2O = dTMP + diphosphate + H(+). The enzyme catalyses UTP + H2O = UMP + diphosphate + H(+). Functionally, nucleoside triphosphate pyrophosphatase that hydrolyzes dTTP and UTP. May have a dual role in cell division arrest and in preventing the incorporation of modified nucleotides into cellular nucleic acids. This Chlamydia trachomatis serovar A (strain ATCC VR-571B / DSM 19440 / HAR-13) protein is dTTP/UTP pyrophosphatase.